The following is a 272-amino-acid chain: Acyl-[acyl-carrier-protein]--UDP-N-acetylglucosamine O-acyltransferase (272 aa).

This sequence belongs to the transferase hexapeptide repeat family. LpxA subfamily. In terms of assembly, homotrimer.

The protein localises to the cytoplasm. It carries out the reaction a (3R)-hydroxyacyl-[ACP] + UDP-N-acetyl-alpha-D-glucosamine = a UDP-3-O-[(3R)-3-hydroxyacyl]-N-acetyl-alpha-D-glucosamine + holo-[ACP]. It functions in the pathway glycolipid biosynthesis; lipid IV(A) biosynthesis; lipid IV(A) from (3R)-3-hydroxytetradecanoyl-[acyl-carrier-protein] and UDP-N-acetyl-alpha-D-glucosamine: step 1/6. Its function is as follows. Involved in the biosynthesis of lipid A, a phosphorylated glycolipid that anchors the lipopolysaccharide to the outer membrane of the cell. The chain is Acyl-[acyl-carrier-protein]--UDP-N-acetylglucosamine O-acyltransferase from Rhizobium etli (strain ATCC 51251 / DSM 11541 / JCM 21823 / NBRC 15573 / CFN 42).